The sequence spans 167 residues: Large ribosomal subunit protein uL10 (167 aa).

This sequence belongs to the universal ribosomal protein uL10 family. In terms of assembly, part of the ribosomal stalk of the 50S ribosomal subunit. The N-terminus interacts with L11 and the large rRNA to form the base of the stalk. The C-terminus forms an elongated spine to which L12 dimers bind in a sequential fashion forming a multimeric L10(L12)X complex.

Forms part of the ribosomal stalk, playing a central role in the interaction of the ribosome with GTP-bound translation factors. This chain is Large ribosomal subunit protein uL10, found in Paraburkholderia phytofirmans (strain DSM 17436 / LMG 22146 / PsJN) (Burkholderia phytofirmans).